The primary structure comprises 421 residues: Ig-like V-type domain-containing protein FAM187A (421 aa).

An N-terminal signal peptide occupies residues 1–18 (MNLAHTTVLLWAWGSLQA). Residues 19 to 377 (FEIVEKENIF…VSFSDPETRA (359 aa)) lie on the Extracellular side of the membrane. The Ig-like V-type domain maps to 268-362 (PWLPQVPIQF…IAGFRLGVTS (95 aa)). Cysteines 290 and 346 form a disulfide. A glycan (N-linked (GlcNAc...) asparagine) is linked at Asn-318. The helical transmembrane segment at 378 to 398 (ALGLILIGYMLITVIFISIHL) threads the bilayer. The Cytoplasmic segment spans residues 399 to 421 (CRCCCYLFRFCPNFSPRLSRPQL).

It belongs to the FAM187 family.

The protein resides in the membrane. The chain is Ig-like V-type domain-containing protein FAM187A (FAM187A) from Bos taurus (Bovine).